The sequence spans 479 residues: Flotillin-like protein 3 (479 aa).

The S-palmitoyl cysteine moiety is linked to residue Cys36. Coiled coils occupy residues 227–251 (KVKT…AALA) and 306–326 (EYET…KQAE).

This sequence belongs to the band 7/mec-2 family. Flotillin subfamily. Post-translationally, may be palmitoylated.

The protein resides in the cell membrane. Its subcellular location is the membrane. The protein localises to the caveola. May act as a scaffolding protein within caveolar membranes, functionally participating in formation of caveolae or caveolae-like vesicles. The chain is Flotillin-like protein 3 (FLOT3) from Arabidopsis thaliana (Mouse-ear cress).